The chain runs to 261 residues: Endonuclease NucS (261 aa).

The protein belongs to the NucS endonuclease family.

The protein resides in the cytoplasm. Functionally, cleaves both 3' and 5' ssDNA extremities of branched DNA structures. The chain is Endonuclease NucS from Aeropyrum pernix (strain ATCC 700893 / DSM 11879 / JCM 9820 / NBRC 100138 / K1).